A 1382-amino-acid polypeptide reads, in one-letter code: DNA-directed RNA polymerase subunit beta' (1382 aa).

Zn(2+) is bound by residues Cys70, Cys72, Cys85, and Cys88. Residues Asp460, Asp462, and Asp464 each contribute to the Mg(2+) site. Residues Cys808, Cys882, Cys889, and Cys892 each coordinate Zn(2+).

The protein belongs to the RNA polymerase beta' chain family. As to quaternary structure, the RNAP catalytic core consists of 2 alpha, 1 beta, 1 beta' and 1 omega subunit. When a sigma factor is associated with the core the holoenzyme is formed, which can initiate transcription. Requires Mg(2+) as cofactor. Zn(2+) serves as cofactor.

It catalyses the reaction RNA(n) + a ribonucleoside 5'-triphosphate = RNA(n+1) + diphosphate. Its function is as follows. DNA-dependent RNA polymerase catalyzes the transcription of DNA into RNA using the four ribonucleoside triphosphates as substrates. The protein is DNA-directed RNA polymerase subunit beta' of Geobacter sp. (strain M21).